The sequence spans 100 residues: MAKKSMIARDVKRKKMVERFAAKRSALMEAFANAADPMERLEIHRKIQQLPRNSAPTRMRNRCWATGKPRGVYRDFGLCRNQLRERAHKGLLPGVVKSSW.

Belongs to the universal ribosomal protein uS14 family. As to quaternary structure, part of the 30S ribosomal subunit. Contacts proteins S3 and S10.

Its function is as follows. Binds 16S rRNA, required for the assembly of 30S particles and may also be responsible for determining the conformation of the 16S rRNA at the A site. The polypeptide is Small ribosomal subunit protein uS14 (Synechococcus sp. (strain RCC307)).